Here is a 389-residue protein sequence, read N- to C-terminus: Trans-2-enoyl-CoA reductase [NADH] (389 aa).

Residues 47 to 52 (GASTGY), 73 to 74 (FE), 110 to 111 (DA), and 138 to 139 (LA) contribute to the NAD(+) site. A substrate-binding site is contributed by tyrosine 224. Tyrosine 234 functions as the Proton donor in the catalytic mechanism. Residues lysine 243 and 272–274 (LVT) each bind NAD(+).

The protein belongs to the TER reductase family. Monomer.

It catalyses the reaction a 2,3-saturated acyl-CoA + NAD(+) = a (2E)-enoyl-CoA + NADH + H(+). It participates in lipid metabolism; fatty acid biosynthesis. Functionally, involved in the fatty acid synthesis (FAS II). Catalyzes the reduction of a carbon-carbon double bond in an enoyl moiety that is covalently linked to a coenzyme A (CoA). In Clostridium perfringens (strain ATCC 13124 / DSM 756 / JCM 1290 / NCIMB 6125 / NCTC 8237 / Type A), this protein is Trans-2-enoyl-CoA reductase [NADH].